The primary structure comprises 207 residues: Ribonuclease HII (207 aa).

In terms of domain architecture, RNase H type-2 spans H19–E207. A divalent metal cation contacts are provided by D25, E26, and D117.

Belongs to the RNase HII family. It depends on Mn(2+) as a cofactor. Mg(2+) serves as cofactor.

Its subcellular location is the cytoplasm. It carries out the reaction Endonucleolytic cleavage to 5'-phosphomonoester.. Its function is as follows. Endonuclease that specifically degrades the RNA of RNA-DNA hybrids. The protein is Ribonuclease HII of Vibrio vulnificus (strain CMCP6).